A 600-amino-acid chain; its full sequence is Prostaglandin G/H synthase 1 (600 aa).

A signal peptide spans 1–24 (MSRQSISLRFPLLLLLLSPSPVFS). One can recognise an EGF-like domain in the interval 32-70 (PVNPCCYYPCQHQGICVRFGLDRYQCDCTRTGYSGPNCT). Cystine bridges form between C36-C47, C37-C159, C41-C57, and C59-C69. N-linked (GlcNAc...) asparagine glycosylation occurs at N68. 4 helical membrane-spanning segments follow: residues 74-82 (IWTWLRTTL), 86-92 (PSFIHFL), 97-105 (RWLWDFVNA), and 108-122 (IRDTLMRLVLTVRSN). N-linked (GlcNAc...) asparagine glycosylation occurs at N144. The Proton acceptor role is filled by H207. Residue Y385 is the For cyclooxygenase activity of the active site. H388 lines the heme b pocket. N410 carries an N-linked (GlcNAc...) asparagine glycan. C569 and C575 are oxidised to a cystine.

It belongs to the prostaglandin G/H synthase family. As to quaternary structure, homodimer. The cofactor is heme b.

Its subcellular location is the endoplasmic reticulum membrane. The protein resides in the microsome membrane. The catalysed reaction is (5Z,8Z,11Z,14Z)-eicosatetraenoate + AH2 + 2 O2 = prostaglandin H2 + A + H2O. The enzyme catalyses (5Z,8Z,11Z,14Z)-eicosatetraenoate + 2 O2 = prostaglandin G2. It carries out the reaction prostaglandin G2 + AH2 = prostaglandin H2 + A + H2O. It catalyses the reaction (9Z,12Z)-octadecadienoate + AH2 + O2 = (9R)-hydroxy-(10E,12Z)-octadecadienoate + A + H2O. The catalysed reaction is (9Z,12Z)-octadecadienoate + AH2 + O2 = (9S)-hydroxy-(10E,12Z)-octadecadienoate + A + H2O. The enzyme catalyses (9Z,12Z)-octadecadienoate + AH2 + O2 = (13S)-hydroxy-(9Z,11E)-octadecadienoate + A + H2O. It carries out the reaction (9Z,12Z)-octadecadienoate + AH2 + O2 = (13R)-hydroxy-(9Z,11E)-octadecadienoate + A + H2O. The protein operates within lipid metabolism; prostaglandin biosynthesis. Its activity is regulated as follows. The cyclooxygenase activity is inhibited by nonsteroidal anti-inflammatory drugs (NSAIDs) including ibuprofen, flurbiprofen, ketoprofen, naproxen, flurbiprofen, anirolac, fenclofenac and diclofenac. Dual cyclooxygenase and peroxidase that plays an important role in the biosynthesis pathway of prostanoids, a class of C20 oxylipins mainly derived from arachidonate ((5Z,8Z,11Z,14Z)-eicosatetraenoate, AA, C20:4(n-6)), with a particular role in the inflammatory response. The cyclooxygenase activity oxygenates AA to the hydroperoxy endoperoxide prostaglandin G2 (PGG2), and the peroxidase activity reduces PGG2 to the hydroxy endoperoxide prostaglandin H2 (PGH2), the precursor of all 2-series prostaglandins and thromboxanes. This complex transformation is initiated by abstraction of hydrogen at carbon 13 (with S-stereochemistry), followed by insertion of molecular O2 to form the endoperoxide bridge between carbon 9 and 11 that defines prostaglandins. The insertion of a second molecule of O2 (bis-oxygenase activity) yields a hydroperoxy group in PGG2 that is then reduced to PGH2 by two electrons. Involved in the constitutive production of prostanoids in particular in the stomach and platelets. In gastric epithelial cells, it is a key step in the generation of prostaglandins, such as prostaglandin E2 (PGE2), which plays an important role in cytoprotection. In platelets, it is involved in the generation of thromboxane A2 (TXA2), which promotes platelet activation and aggregation, vasoconstriction and proliferation of vascular smooth muscle cells. Can also use linoleate (LA, (9Z,12Z)-octadecadienoate, C18:2(n-6)) as substrate and produce hydroxyoctadecadienoates (HODEs) in a regio- and stereospecific manner, being (9R)-HODE ((9R)-hydroxy-(10E,12Z)-octadecadienoate) and (13S)-HODE ((13S)-hydroxy-(9Z,11E)-octadecadienoate) its major products. This Ovis aries (Sheep) protein is Prostaglandin G/H synthase 1 (PTGS1).